A 644-amino-acid polypeptide reads, in one-letter code: Putative aldehyde dehydrogenase-like protein YHR039C (644 aa).

N15 carries N-linked (GlcNAc...) asparagine glycosylation. The active-site Proton acceptor is E354. C389 acts as the Nucleophile in catalysis. N-linked (GlcNAc...) asparagine glycans are attached at residues N565 and N627.

The protein belongs to the aldehyde dehydrogenase family. N-glycosylated.

Its subcellular location is the endoplasmic reticulum. This Saccharomyces cerevisiae (strain ATCC 204508 / S288c) (Baker's yeast) protein is Putative aldehyde dehydrogenase-like protein YHR039C (MSC7).